The chain runs to 331 residues: T-cell acute lymphocytic leukemia protein 1 (331 aa).

The segment covering methionine 1 to alanine 22 has biased composition (basic and acidic residues). Disordered regions lie at residues methionine 1 to alanine 27 and glutamate 40 to histidine 86. Residue serine 12 is modified to Phosphoserine. A compositionally biased stretch (gly residues) spans alanine 56–alanine 70. Residues arginine 72–histidine 86 are compositionally biased toward basic and acidic residues. Phosphoserine is present on residues serine 122 and serine 172. The bHLH domain maps to valine 187–leucine 239. The disordered stretch occupies residues glutamate 249–arginine 331. The span at glycine 263–alanine 275 shows a compositional bias: gly residues.

In terms of assembly, efficient DNA binding requires dimerization with another bHLH protein. Forms heterodimers with TCF3. Binds to the LIM domain containing protein LMO2 and to DRG1. Can assemble in a complex with LDB1 and LMO2. Component of a TAL-1 complex composed at least of CBFA2T3, LDB1, TAL1 and TCF3. Interacts with SBNO2; this interaction inhibits TAL1 occupancy of the DCSTAMP promoter, leading to the activation of the DCSTAMP promoter by the transcription factor MITF. Post-translationally, phosphorylated on serine residues. Phosphorylation of Ser-122 is strongly stimulated by hypoxia. In terms of processing, ubiquitinated; subsequent to hypoxia-dependent phosphorylation of Ser-122, ubiquitination targets the protein for rapid degradation via the ubiquitin system. This process may be characteristic for microvascular endothelial cells, since it could not be observed in large vessel endothelial cells. In terms of tissue distribution, leukemic stem cell.

Its subcellular location is the nucleus. Functionally, implicated in the genesis of hemopoietic malignancies. It may play an important role in hemopoietic differentiation. Serves as a positive regulator of erythroid differentiation. The polypeptide is T-cell acute lymphocytic leukemia protein 1 (TAL1) (Homo sapiens (Human)).